The chain runs to 211 residues: Large ribosomal subunit protein uL4 (211 aa).

Positions 44–90 (ERQGTHSTLTKGEVRGGGKKPWRQKHTGKARTGSTRNPHWTGGGVVF) are disordered. The segment covering 60–72 (GGKKPWRQKHTGK) has biased composition (basic residues).

This sequence belongs to the universal ribosomal protein uL4 family. Part of the 50S ribosomal subunit.

Its function is as follows. One of the primary rRNA binding proteins, this protein initially binds near the 5'-end of the 23S rRNA. It is important during the early stages of 50S assembly. It makes multiple contacts with different domains of the 23S rRNA in the assembled 50S subunit and ribosome. In terms of biological role, forms part of the polypeptide exit tunnel. The polypeptide is Large ribosomal subunit protein uL4 (Ureaplasma urealyticum serovar 10 (strain ATCC 33699 / Western)).